A 202-amino-acid polypeptide reads, in one-letter code: ATP-dependent Clp protease proteolytic subunit (202 aa).

The active-site Nucleophile is the Ser-98. His-123 is an active-site residue.

The protein belongs to the peptidase S14 family. In terms of assembly, fourteen ClpP subunits assemble into 2 heptameric rings which stack back to back to give a disk-like structure with a central cavity, resembling the structure of eukaryotic proteasomes.

The protein resides in the cytoplasm. It catalyses the reaction Hydrolysis of proteins to small peptides in the presence of ATP and magnesium. alpha-casein is the usual test substrate. In the absence of ATP, only oligopeptides shorter than five residues are hydrolyzed (such as succinyl-Leu-Tyr-|-NHMec, and Leu-Tyr-Leu-|-Tyr-Trp, in which cleavage of the -Tyr-|-Leu- and -Tyr-|-Trp bonds also occurs).. Cleaves peptides in various proteins in a process that requires ATP hydrolysis. Has a chymotrypsin-like activity. Plays a major role in the degradation of misfolded proteins. The sequence is that of ATP-dependent Clp protease proteolytic subunit from Solidesulfovibrio magneticus (strain ATCC 700980 / DSM 13731 / RS-1) (Desulfovibrio magneticus).